A 358-amino-acid chain; its full sequence is NADH-quinone oxidoreductase subunit H (358 aa).

A run of 8 helical transmembrane segments spans residues 30-50 (IVIG…MIFM), 96-116 (FLYN…FSCL), 129-149 (VGIF…LLAG), 165-185 (GAQM…IVIL), 201-221 (GWFL…YLIA), 264-284 (LFII…PLHI), 297-317 (IPGF…LMWI), and 336-356 (YLVP…VFKL).

This sequence belongs to the complex I subunit 1 family. As to quaternary structure, NDH-1 is composed of 14 different subunits. Subunits NuoA, H, J, K, L, M, N constitute the membrane sector of the complex.

It is found in the cell inner membrane. The catalysed reaction is a quinone + NADH + 5 H(+)(in) = a quinol + NAD(+) + 4 H(+)(out). Its function is as follows. NDH-1 shuttles electrons from NADH, via FMN and iron-sulfur (Fe-S) centers, to quinones in the respiratory chain. The immediate electron acceptor for the enzyme in this species is believed to be ubiquinone. Couples the redox reaction to proton translocation (for every two electrons transferred, four hydrogen ions are translocated across the cytoplasmic membrane), and thus conserves the redox energy in a proton gradient. This subunit may bind ubiquinone. In Phocaeicola vulgatus (strain ATCC 8482 / DSM 1447 / JCM 5826 / CCUG 4940 / NBRC 14291 / NCTC 11154) (Bacteroides vulgatus), this protein is NADH-quinone oxidoreductase subunit H.